Consider the following 365-residue polypeptide: Quinolone epoxide rearrangement protein asqO (365 aa).

It belongs to the quinolone epoxide rearrangement protein penF family.

It catalyses the reaction (1'E,3'E)-5-(3,3-dimethyloxiran-2-yl)-3-methylhexa-1,3-dienyl-quinolinone B = aspoquinolone A. The enzyme catalyses (1'E,3'E)-5-(3,3-dimethyloxiran-2-yl)-3-methylhexa-1,3-dienyl-quinolinone B = aspoquinolone B. It functions in the pathway secondary metabolite biosynthesis. It participates in alkaloid biosynthesis. The protein operates within mycotoxin biosynthesis. Functionally, quinolone epoxide rearrangement protein; part of the gene cluster that mediates the biosynthesis of the aspoquinolone mycotoxins. Within the pathway, asqO catalyzes an enzymatic 3-exo-tet cyclization to yield the cyclopropyl-THF ring system in aspoquinolone. The first step of the pathway is catalyzed by the nonribosomal peptide synthetase asqK that condenses anthranilic acid and O-methyl-L-tyrosine to produce 4'-methoxycyclopeptin. 4'-methoxycyclopeptin is then converted to 4'-methoxydehydrocyclopeptin by the ketoglutarate-dependent dioxygenase asqJ. AsqJ also converts its first product 4'-methoxydehydrocyclopeptin to 4'-methoxycyclopenin. The following conversion of 4'-methoxycyclopenin into 4'-methoxyviridicatin is catalyzed by the cyclopenase asqI. 4'-methoxyviridicatin is the precursor of quinolone natural products, and is further converted to quinolinone B. The prenyltransferase asqH1 then catalyzes the canonical Friedel-Crafts alkylation of quinolinone B with dimethylallyl cation to yield dimethylallyl quinolone, which is subjected to FAD-dependent dehydrogenation by the FAD-linked oxidoreductase asqF to yield conjugated aryl diene. The delta(3') double bond then serves as the site of the second alkylation with DMAPP catalyzed by the prenyltransferase asqH2 to yield a carbenium ion intermediate, which can be attacked by H(2)O to yield a styrenyl quinolone containing a C3'-hydroxyprenyl chain. The FAD-dependent monooxygenase asqG performs epoxidation of the terminal C7'-C8' olefin. Finally, after dehydratation of the epoxide at C3 by asqC, the quinolone epoxide rearrangement protein asqO catalyzes an enzymatic 3-exo-tet cyclization to yield the cyclopropyl-THF ring system in aspoquinolone. This is Quinolone epoxide rearrangement protein asqO from Emericella nidulans (strain FGSC A4 / ATCC 38163 / CBS 112.46 / NRRL 194 / M139) (Aspergillus nidulans).